A 215-amino-acid chain; its full sequence is Protein HP-25 homolog 2 (215 aa).

The signal sequence occupies residues 1 to 30 (MPGRGGQSLSMVCVDVWILALSVLSVMADA). A disordered region spans residues 35–79 (VTESCDSQGPPGLPGPPGLPGPPGPPGPPGPPGLRGPTGIPGDIE). In terms of domain architecture, Collagen-like spans 43-76 (GPPGLPGPPGLPGPPGPPGPPGPPGLRGPTGIPG). Residues 45–68 (PGLPGPPGLPGPPGPPGPPGPPGL) show a composition bias toward pro residues. One can recognise a C1q domain in the interval 82-215 (LSPPKSAFAV…GYLLYGNYPG (134 aa)).

The protein localises to the secreted. The sequence is that of Protein HP-25 homolog 2 from Bos taurus (Bovine).